We begin with the raw amino-acid sequence, 1064 residues long: DNA-directed RNA polymerase subunit beta (1064 aa).

Belongs to the RNA polymerase beta chain family. As to quaternary structure, in plastids the minimal PEP RNA polymerase catalytic core is composed of four subunits: alpha, beta, beta', and beta''. When a (nuclear-encoded) sigma factor is associated with the core the holoenzyme is formed, which can initiate transcription.

Its subcellular location is the plastid. It localises to the chloroplast. It carries out the reaction RNA(n) + a ribonucleoside 5'-triphosphate = RNA(n+1) + diphosphate. DNA-dependent RNA polymerase catalyzes the transcription of DNA into RNA using the four ribonucleoside triphosphates as substrates. This chain is DNA-directed RNA polymerase subunit beta, found in Jasminum nudiflorum (Winter jasmine).